Here is a 419-residue protein sequence, read N- to C-terminus: UDP-N-acetylglucosamine 1-carboxyvinyltransferase (419 aa).

22-23 (KN) contributes to the phosphoenolpyruvate binding site. Arg-95 is a UDP-N-acetyl-alpha-D-glucosamine binding site. Cys-119 (proton donor) is an active-site residue. Residue Cys-119 is modified to 2-(S-cysteinyl)pyruvic acid O-phosphothioketal. Residues Asp-308 and Ile-330 each contribute to the UDP-N-acetyl-alpha-D-glucosamine site.

Belongs to the EPSP synthase family. MurA subfamily.

The protein resides in the cytoplasm. The enzyme catalyses phosphoenolpyruvate + UDP-N-acetyl-alpha-D-glucosamine = UDP-N-acetyl-3-O-(1-carboxyvinyl)-alpha-D-glucosamine + phosphate. It participates in cell wall biogenesis; peptidoglycan biosynthesis. Its function is as follows. Cell wall formation. Adds enolpyruvyl to UDP-N-acetylglucosamine. This chain is UDP-N-acetylglucosamine 1-carboxyvinyltransferase, found in Rickettsia bellii (strain OSU 85-389).